A 226-amino-acid chain; its full sequence is Phospholipase Culp4 (226 aa).

An N-terminal signal peptide occupies residues 1–45 (MIPRPQPHSGRWRAGAARRLTSLVAAAFAAATLLLTPALAPPASA). Cysteine 47 and cysteine 117 are oxidised to a cystine. Catalysis depends on serine 128, which acts as the Nucleophile. The cysteines at positions 191 and 198 are disulfide-linked. The active site involves aspartate 195. The active-site Proton donor/acceptor is histidine 207.

The protein belongs to the cutinase family. In terms of assembly, homodimer.

Its subcellular location is the cell membrane. The protein localises to the secreted. It is found in the cell wall. The enzyme catalyses 1,2-dihexadecanoyl-sn-glycero-3-phosphocholine + H2O = 1-hexadecanoyl-sn-glycero-3-phosphocholine + hexadecanoate + H(+). The catalysed reaction is a butanoate ester + H2O = an aliphatic alcohol + butanoate + H(+). Inhibited by high concentrations of paraoxon. Inhibited by tetrahydrolipstatin (THL), a specific lipase inhibitor. Its function is as follows. A2-type phospholipase, which is probably involved in the degradation of macrophage membrane. Hydrolyzes dipalmitoylphosphatidylcholine. Also shows moderate esterase activity and hydrolyzes the p-nitrophenol-linked aliphatic ester pNP-butyrate (C4). Does not exhibit cutinase activity. This chain is Phospholipase Culp4, found in Mycobacterium tuberculosis (strain ATCC 25618 / H37Rv).